A 393-amino-acid polypeptide reads, in one-letter code: Bone morphogenetic protein 2 (393 aa).

The N-terminal stretch at Met-1–Gly-19 is a signal peptide. Residues Gly-20–Arg-279 constitute a propeptide, cleaved by PCSK5. Residue Ser-85 is modified to Phosphoserine. N-linked (GlcNAc...) asparagine glycosylation is found at Asn-133, Asn-161, and Asn-197. The disordered stretch occupies residues Gly-268 to Lys-290. Over residues His-271–Lys-290 the composition is skewed to basic residues. 3 disulfides stabilise this stretch: Cys-293–Cys-358, Cys-322–Cys-390, and Cys-326–Cys-392. N-linked (GlcNAc...) asparagine glycosylation occurs at Asn-335.

It belongs to the TGF-beta family. As to quaternary structure, homodimer; disulfide-linked. Interacts with SOSTDC1. Interacts with GREM2, RGMA, RGMB and RGMC. Interacts with ASPN. Interacts with MAFP5. Interacts with FBN1 (via N-terminal domain) and FBN2. Interacts with type I receptor BMPR1A. Interacts with type II receptor BMPR2. Interacts with SCUBE3. Interacts with TNFAIP6 (primarily via Link domain); this interaction is inhibited by hyaluronan. Interacts with ERFE. Interacts with BMPR1A/ALK3; the interaction may induce HAMP expression. Forms heterodimers with BMP6 in vitro; the heterodimer then binds to its receptor BMPR1A /ALK3 and may induce HAMP expression. Interacts with TGFBR3. As to expression, expressed in femur, calvaria, trachea, lung and ovary.

The protein localises to the secreted. Growth factor of the TGF-beta superfamily that plays essential roles in many developmental processes, including cardiogenesis, neurogenesis, and osteogenesis. Induces cartilage and bone formation. Initiates the canonical BMP signaling cascade by associating with type I receptor BMPR1A and type II receptor BMPR2. Once all three components are bound together in a complex at the cell surface, BMPR2 phosphorylates and activates BMPR1A. In turn, BMPR1A propagates signal by phosphorylating SMAD1/5/8 that travel to the nucleus and act as activators and repressors of transcription of target genes. Also acts to promote expression of HAMP, via the interaction with its receptor BMPR1A/ALK3. Can also signal through non-canonical pathways such as ERK/MAP kinase signaling cascade that regulates osteoblast differentiation. Also stimulates the differentiation of myoblasts into osteoblasts via the EIF2AK3-EIF2A-ATF4 pathway by stimulating EIF2A phosphorylation which leads to increased expression of ATF4 which plays a central role in osteoblast differentiation. Acts as a positive regulator of odontoblast differentiation during mesenchymal tooth germ formation, expression is repressed during the bell stage by MSX1-mediated inhibition of CTNNB1 signaling. The polypeptide is Bone morphogenetic protein 2 (Bmp2) (Rattus norvegicus (Rat)).